The following is a 163-amino-acid chain: Phosphopantetheine adenylyltransferase (163 aa).

Residue Ser-9 participates in substrate binding. ATP contacts are provided by residues 9-10 (SF) and His-17. Substrate is bound by residues Lys-41, Thr-73, and Arg-87. ATP-binding positions include 88 to 90 (GLR), Glu-98, and 123 to 129 (YAYFSSS).

It belongs to the bacterial CoaD family. In terms of assembly, homohexamer. It depends on Mg(2+) as a cofactor.

The protein resides in the cytoplasm. The catalysed reaction is (R)-4'-phosphopantetheine + ATP + H(+) = 3'-dephospho-CoA + diphosphate. It participates in cofactor biosynthesis; coenzyme A biosynthesis; CoA from (R)-pantothenate: step 4/5. Reversibly transfers an adenylyl group from ATP to 4'-phosphopantetheine, yielding dephospho-CoA (dPCoA) and pyrophosphate. In Lactiplantibacillus plantarum (strain ATCC BAA-793 / NCIMB 8826 / WCFS1) (Lactobacillus plantarum), this protein is Phosphopantetheine adenylyltransferase.